The following is a 397-amino-acid chain: B3 domain-containing protein At4g34400 (397 aa).

A DNA-binding region (TF-B3) is located at residues 14-107 (PRFFTVFVSH…IFEVSIFRGY (94 aa)). Positions 118–255 (ELEEEEEDSV…SSYAPDKEDT (138 aa)) are disordered. Residues 137-160 (TGAKSEMKNTVPEGRDKGKSKVEV) are compositionally biased toward basic and acidic residues. Acidic residues-rich tracts occupy residues 161–186 (VEDSDDDEEEDSVYSESSEETETDTD), 212–227 (SSDDEEDEEEDSDSDY), and 235–246 (DIEENSISEEDS).

It localises to the nucleus. In Arabidopsis thaliana (Mouse-ear cress), this protein is B3 domain-containing protein At4g34400.